Consider the following 468-residue polypeptide: ATP synthase subunit beta (468 aa).

ATP is bound at residue 155 to 162 (GGAGVGKT).

It belongs to the ATPase alpha/beta chains family. As to quaternary structure, F-type ATPases have 2 components, CF(1) - the catalytic core - and CF(0) - the membrane proton channel. CF(1) has five subunits: alpha(3), beta(3), gamma(1), delta(1), epsilon(1). CF(0) has three main subunits: a(1), b(2) and c(9-12). The alpha and beta chains form an alternating ring which encloses part of the gamma chain. CF(1) is attached to CF(0) by a central stalk formed by the gamma and epsilon chains, while a peripheral stalk is formed by the delta and b chains.

It localises to the cell membrane. It carries out the reaction ATP + H2O + 4 H(+)(in) = ADP + phosphate + 5 H(+)(out). Produces ATP from ADP in the presence of a proton gradient across the membrane. The catalytic sites are hosted primarily by the beta subunits. This chain is ATP synthase subunit beta, found in Bacillus cereus (strain G9842).